A 240-amino-acid chain; its full sequence is Sulfite dehydrogenase subunit B (240 aa).

4Fe-4S ferredoxin-type domains lie at 4-34 (LALV…WAGP), 64-95 (TETV…KRPD), and 97-126 (GVVL…LDAQ). [4Fe-4S] cluster is bound by residues cysteine 13, cysteine 16, cysteine 19, cysteine 23, cysteine 73, cysteine 76, cysteine 81, cysteine 85, cysteine 106, cysteine 109, cysteine 112, and cysteine 116.

As to quaternary structure, forms a heterotrimeric membrane-bound complex composed of a catalytic heterodimer (SoeAB) and a membrane anchor protein (SoeC). It depends on [4Fe-4S] cluster as a cofactor.

The protein resides in the cell inner membrane. Its function is as follows. Part of the SoeABC complex that catalyzes the oxidation of sulfite to sulfate. SoeB is probably the electron transfer subunit. The sequence is that of Sulfite dehydrogenase subunit B from Allochromatium vinosum (strain ATCC 17899 / DSM 180 / NBRC 103801 / NCIMB 10441 / D) (Chromatium vinosum).